The chain runs to 277 residues: Uridine phosphorylase (277 aa).

Belongs to the PNP/UDP phosphorylase family.

The protein localises to the cytoplasm. It carries out the reaction uridine + phosphate = alpha-D-ribose 1-phosphate + uracil. The protein operates within pyrimidine metabolism; UMP biosynthesis via salvage pathway; uracil from uridine (phosphorylase route): step 1/1. Catalyzes the reversible phosphorylytic cleavage of uridine to uracil and ribose-1-phosphate. In Thermococcus kodakarensis (strain ATCC BAA-918 / JCM 12380 / KOD1) (Pyrococcus kodakaraensis (strain KOD1)), this protein is Uridine phosphorylase.